We begin with the raw amino-acid sequence, 461 residues long: Acetylcholine receptor subunit alpha (461 aa).

The signal sequence occupies residues 1 to 24; it reads MILCSYWHVGLVLLLFSCCGLVLG. At 25–234 the chain is on the extracellular side; sequence SEHETRLVAN…ITYHFIMQRI (210 aa). Cystine bridges form between C152/C166 and C216/C217. A glycan (N-linked (GlcNAc...) asparagine) is linked at N165. The next 3 membrane-spanning stretches (helical) occupy residues 235–259, 267–285, and 301–320; these read PLYF…VFYL, MTLS…LVIV, and YMLF…VVVI. Residues 321–432 are Cytoplasmic-facing; the sequence is NTHHRSPSTH…WKYVAMVIDH (112 aa). The chain crosses the membrane as a helical span at residues 433 to 451; sequence ILLCVFMLICIIGTVSVFA.

The protein belongs to the ligand-gated ion channel (TC 1.A.9) family. Acetylcholine receptor (TC 1.A.9.1) subfamily. Alpha-1/CHRNA1 sub-subfamily. As to quaternary structure, pentamer of two alpha chains, and one each of the beta, delta, and gamma chains.

Its subcellular location is the postsynaptic cell membrane. It is found in the cell membrane. The catalysed reaction is K(+)(in) = K(+)(out). It carries out the reaction Na(+)(in) = Na(+)(out). Functionally, upon acetylcholine binding, the AChR responds by an extensive change in conformation that affects all subunits and leads to opening of an ion-conducting channel across the plasma membrane. This chain is Acetylcholine receptor subunit alpha (CHRNA1), found in Torpedo marmorata (Marbled electric ray).